Here is a 384-residue protein sequence, read N- to C-terminus: MRSLDAFAGQKLAALDAQSLRRRLSPTRRHDGAVVERDGKRMISFSCNDYLNLSQHHLVRAAAAEAALNYGAGAAASRLVTGDHPLLSDLEKRLAHLKGTEAACVFGSGYLANTGVIPTLVGPGDVILIDALAHACIWAGAQLSGAKVVKFAHNDPADLERLLLAERGAARHALVATDGVFSMDGDIAPLDALSELCQRHDAWLLSDDAHGVGVLAEGRGSGALFPTAKIPLQMGTLSKALGSYGGYLCGSQAVVDLLKTRARTLVYATGLPPASAAAALASLDLIAANPTMTEVPLAKARLFTRRLGLPEACSPIVPVVLGSAESALAASTELQNQGFLVVAIRPPTVPDGTARLRIAFSAAHEDADIIRLADAIAKLRETAS.

Residue Arg-22 coordinates substrate. 109-110 serves as a coordination point for pyridoxal 5'-phosphate; that stretch reads GY. Residue His-134 coordinates substrate. Residues Ser-182, 207–210, and 236–239 contribute to the pyridoxal 5'-phosphate site; these read DDAH and TLSK. Lys-239 carries the N6-(pyridoxal phosphate)lysine modification. Substrate is bound at residue Thr-348.

Belongs to the class-II pyridoxal-phosphate-dependent aminotransferase family. BioF subfamily. As to quaternary structure, homodimer. It depends on pyridoxal 5'-phosphate as a cofactor.

The catalysed reaction is 6-carboxyhexanoyl-[ACP] + L-alanine + H(+) = (8S)-8-amino-7-oxononanoate + holo-[ACP] + CO2. Its pathway is cofactor biosynthesis; biotin biosynthesis. In terms of biological role, catalyzes the decarboxylative condensation of pimeloyl-[acyl-carrier protein] and L-alanine to produce 8-amino-7-oxononanoate (AON), [acyl-carrier protein], and carbon dioxide. The sequence is that of Putative 8-amino-7-oxononanoate synthase (bioF) from Caulobacter vibrioides (strain ATCC 19089 / CIP 103742 / CB 15) (Caulobacter crescentus).